The chain runs to 756 residues: Catalase-peroxidase (756 aa).

The first 26 residues, 1 to 26 (MKGKTVNKQTLAALVSALLVFNPAVA), serve as a signal peptide directing secretion. The segment at residues 126 to 248 (WHSAGTYRTL…LGATHMGLIY (123 aa)) is a cross-link (tryptophyl-tyrosyl-methioninium (Trp-Tyr) (with M-274)). Residue histidine 127 is the Proton acceptor of the active site. Residues 248 to 274 (YVNPEGPKGVPDPLGSAKNIRTAFSRM) constitute a cross-link (tryptophyl-tyrosyl-methioninium (Tyr-Met) (with W-126)). Residue histidine 289 coordinates heme b.

It belongs to the peroxidase family. Peroxidase/catalase subfamily. In terms of assembly, homodimer or homotetramer. It depends on heme b as a cofactor. Post-translationally, formation of the three residue Trp-Tyr-Met cross-link is important for the catalase, but not the peroxidase activity of the enzyme.

The catalysed reaction is H2O2 + AH2 = A + 2 H2O. It catalyses the reaction 2 H2O2 = O2 + 2 H2O. Bifunctional enzyme with both catalase and broad-spectrum peroxidase activity. This chain is Catalase-peroxidase, found in Shewanella loihica (strain ATCC BAA-1088 / PV-4).